Reading from the N-terminus, the 489-residue chain is Serine/threonine-protein kinase BSK2 (489 aa).

The tract at residues 1–30 (MGCLHSKTANLPSSDDPSAPNKPESVNGDQ) is disordered. A lipid anchor (N-myristoyl glycine) is attached at Gly2. The span at 7–16 (KTANLPSSDD) shows a compositional bias: polar residues. The Protein kinase domain maps to 56-322 (SCIVSEGGEK…QEEVASHVLM (267 aa)). Residues 62–70 (GGEKAPNVV) and Lys84 each bind ATP. Asp178 functions as the Proton acceptor in the catalytic mechanism.

It belongs to the protein kinase superfamily. Ser/Thr protein kinase family. Phosphorylated by BRI1 upon brassinolide (BL) treatment.

It localises to the cell membrane. It carries out the reaction L-seryl-[protein] + ATP = O-phospho-L-seryl-[protein] + ADP + H(+). It catalyses the reaction L-threonyl-[protein] + ATP = O-phospho-L-threonyl-[protein] + ADP + H(+). Functionally, probable serine/threonine kinase that acts as a positive regulator of brassinosteroid (BR) signaling downstream of the receptor kinase BRI1. Mediates signal transduction from BRI1 by functioning as substrate of BRI1. This is Serine/threonine-protein kinase BSK2 from Arabidopsis thaliana (Mouse-ear cress).